Reading from the N-terminus, the 407-residue chain is 1-deoxy-D-xylulose 5-phosphate reductoisomerase (407 aa).

NADPH-binding residues include threonine 25, glycine 26, serine 27, isoleucine 28, asparagine 53, and asparagine 136. Lysine 137 serves as a coordination point for 1-deoxy-D-xylulose 5-phosphate. Glutamate 138 provides a ligand contact to NADPH. Mn(2+) is bound at residue aspartate 162. 4 residues coordinate 1-deoxy-D-xylulose 5-phosphate: serine 163, glutamate 164, serine 188, and histidine 211. Glutamate 164 is a binding site for Mn(2+). Residue glycine 217 participates in NADPH binding. 4 residues coordinate 1-deoxy-D-xylulose 5-phosphate: serine 224, asparagine 229, lysine 230, and glutamate 233. Mn(2+) is bound at residue glutamate 233.

The protein belongs to the DXR family. Mg(2+) is required as a cofactor. The cofactor is Mn(2+).

It catalyses the reaction 2-C-methyl-D-erythritol 4-phosphate + NADP(+) = 1-deoxy-D-xylulose 5-phosphate + NADPH + H(+). The protein operates within isoprenoid biosynthesis; isopentenyl diphosphate biosynthesis via DXP pathway; isopentenyl diphosphate from 1-deoxy-D-xylulose 5-phosphate: step 1/6. Functionally, catalyzes the NADPH-dependent rearrangement and reduction of 1-deoxy-D-xylulose-5-phosphate (DXP) to 2-C-methyl-D-erythritol 4-phosphate (MEP). The protein is 1-deoxy-D-xylulose 5-phosphate reductoisomerase of Nitrobacter hamburgensis (strain DSM 10229 / NCIMB 13809 / X14).